The primary structure comprises 185 residues: Ribosome-recycling factor (185 aa).

Belongs to the RRF family.

The protein localises to the cytoplasm. Responsible for the release of ribosomes from messenger RNA at the termination of protein biosynthesis. May increase the efficiency of translation by recycling ribosomes from one round of translation to another. The sequence is that of Ribosome-recycling factor from Pseudomonas savastanoi pv. phaseolicola (strain 1448A / Race 6) (Pseudomonas syringae pv. phaseolicola (strain 1448A / Race 6)).